The following is a 118-amino-acid chain: Large ribosomal subunit protein bL20 (118 aa).

The protein belongs to the bacterial ribosomal protein bL20 family.

In terms of biological role, binds directly to 23S ribosomal RNA and is necessary for the in vitro assembly process of the 50S ribosomal subunit. It is not involved in the protein synthesizing functions of that subunit. The chain is Large ribosomal subunit protein bL20 from Sulfurihydrogenibium sp. (strain YO3AOP1).